We begin with the raw amino-acid sequence, 475 residues long: Ribulose bisphosphate carboxylase large chain (475 aa).

The propeptide occupies 1 to 2 (MS). Pro-3 bears the N-acetylproline mark. At Lys-14 the chain carries N6,N6,N6-trimethyllysine. Asn-123 and Thr-173 together coordinate substrate. Catalysis depends on Lys-175, which acts as the Proton acceptor. Lys-177 contacts substrate. Mg(2+) contacts are provided by Lys-201, Asp-203, and Glu-204. Lys-201 bears the N6-carboxylysine mark. Catalysis depends on His-294, which acts as the Proton acceptor. Residues Arg-295, His-327, and Ser-379 each contribute to the substrate site.

The protein belongs to the RuBisCO large chain family. Type I subfamily. In terms of assembly, heterohexadecamer of 8 large chains and 8 small chains; disulfide-linked. The disulfide link is formed within the large subunit homodimers. The cofactor is Mg(2+). In terms of processing, the disulfide bond which can form in the large chain dimeric partners within the hexadecamer appears to be associated with oxidative stress and protein turnover.

The protein resides in the plastid. Its subcellular location is the chloroplast. The catalysed reaction is 2 (2R)-3-phosphoglycerate + 2 H(+) = D-ribulose 1,5-bisphosphate + CO2 + H2O. It carries out the reaction D-ribulose 1,5-bisphosphate + O2 = 2-phosphoglycolate + (2R)-3-phosphoglycerate + 2 H(+). In terms of biological role, ruBisCO catalyzes two reactions: the carboxylation of D-ribulose 1,5-bisphosphate, the primary event in carbon dioxide fixation, as well as the oxidative fragmentation of the pentose substrate in the photorespiration process. Both reactions occur simultaneously and in competition at the same active site. This is Ribulose bisphosphate carboxylase large chain from Angiopteris evecta (Mule's foot fern).